We begin with the raw amino-acid sequence, 372 residues long: 4-hydroxy-3-methylbut-2-en-1-yl diphosphate synthase (flavodoxin) (372 aa).

Residues Cys270, Cys273, Cys305, and Glu312 each contribute to the [4Fe-4S] cluster site.

The protein belongs to the IspG family. Requires [4Fe-4S] cluster as cofactor.

It carries out the reaction (2E)-4-hydroxy-3-methylbut-2-enyl diphosphate + oxidized [flavodoxin] + H2O + 2 H(+) = 2-C-methyl-D-erythritol 2,4-cyclic diphosphate + reduced [flavodoxin]. Its pathway is isoprenoid biosynthesis; isopentenyl diphosphate biosynthesis via DXP pathway; isopentenyl diphosphate from 1-deoxy-D-xylulose 5-phosphate: step 5/6. Converts 2C-methyl-D-erythritol 2,4-cyclodiphosphate (ME-2,4cPP) into 1-hydroxy-2-methyl-2-(E)-butenyl 4-diphosphate. The protein is 4-hydroxy-3-methylbut-2-en-1-yl diphosphate synthase (flavodoxin) of Salmonella arizonae (strain ATCC BAA-731 / CDC346-86 / RSK2980).